The following is a 117-amino-acid chain: Histone H1-like protein HC1 (117 aa).

Residues 57–117 (EKSGLMTRKP…KSSKSRYLRK (61 aa)) are disordered. Residues 66–81 (PATKAKKAAATKKAAP) show a composition bias toward basic residues. Residues 82-94 (KPKIQAKAAPKAK) show a composition bias toward low complexity. Positions 95–117 (ATTKKTPAKAKAKKSSKSRYLRK) are enriched in basic residues.

The protein belongs to the histone H1/H5 family. HCT subfamily.

Its function is as follows. Might have a role analogous to that of eukaryotic histone proteins. The polypeptide is Histone H1-like protein HC1 (hctA) (Chlamydia psittaci (Chlamydophila psittaci)).